A 289-amino-acid chain; its full sequence is Probable endonuclease 4 (289 aa).

9 residues coordinate Zn(2+): histidine 76, histidine 116, glutamate 152, aspartate 186, histidine 189, histidine 220, aspartate 233, histidine 235, and glutamate 265.

Belongs to the AP endonuclease 2 family. Requires Zn(2+) as cofactor.

The catalysed reaction is Endonucleolytic cleavage to 5'-phosphooligonucleotide end-products.. In terms of biological role, endonuclease IV plays a role in DNA repair. It cleaves phosphodiester bonds at apurinic or apyrimidinic (AP) sites, generating a 3'-hydroxyl group and a 5'-terminal sugar phosphate. The protein is Probable endonuclease 4 of Malacoplasma penetrans (strain HF-2) (Mycoplasma penetrans).